Consider the following 177-residue polypeptide: Adenine phosphoribosyltransferase (177 aa).

This sequence belongs to the purine/pyrimidine phosphoribosyltransferase family. As to quaternary structure, homodimer.

It is found in the cytoplasm. The enzyme catalyses AMP + diphosphate = 5-phospho-alpha-D-ribose 1-diphosphate + adenine. The protein operates within purine metabolism; AMP biosynthesis via salvage pathway; AMP from adenine: step 1/1. Functionally, catalyzes a salvage reaction resulting in the formation of AMP, that is energically less costly than de novo synthesis. The protein is Adenine phosphoribosyltransferase of Rhodococcus jostii (strain RHA1).